The chain runs to 161 residues: MORN repeat-containing protein 5 (161 aa).

MORN repeat units follow at residues 8–30 (YIGEYVDGRMEGKAKYILPTETI), 31–53 (YVGEMKDGMFHGEGTLYFPSGSQ), and 54–75 (YDAIWENGLAIKGTYTFSDGLH).

Expressed in sperm (at protein level).

It localises to the cell projection. It is found in the cilium. The protein resides in the flagellum. The protein is MORN repeat-containing protein 5 (MORN5) of Homo sapiens (Human).